The sequence spans 85 residues: Arminin 2b (85 aa).

Positions 1-18 (MKTVFAILFLAFIALTYA) are cleaved as a signal peptide. A propeptide spanning residues 19 to 57 (RSYEDVKEEIKNEIEKEILEDLEEESDELNDKSKEINDA) is cleaved from the precursor. The residue at position 82 (Ala82) is an Alanine amide.

It belongs to the arminin family. Expressed in entodermal epithelium along the body column.

The protein localises to the secreted. The protein resides in the target cell membrane. Its function is as follows. Antimicrobial peptide with a broad-spectrum antimicrobial activity. Keeps its antibacterial activity under a wide range of salt concentrations that mimic physiological conditions of human blood, which is surprising, since Hydra is an obligate freshwater animal with nearly no salt tolerance. Does not affect red blood cells. The sequence is that of Arminin 2b from Hydra vulgaris (Hydra).